The primary structure comprises 523 residues: GMP synthase [glutamine-hydrolyzing] (523 aa).

In terms of domain architecture, Glutamine amidotransferase type-1 spans 8–205; sequence KILILDFGSQ…VVKICGCERN (198 aa). The Nucleophile role is filled by cysteine 85. Residues histidine 179 and glutamate 181 contribute to the active site. In terms of domain architecture, GMPS ATP-PPase spans 206–398; that stretch reads WTPENIIEDA…LGLPAEMLNR (193 aa). Position 233–239 (233–239) interacts with ATP; that stretch reads SGGVDSS.

Homodimer.

The enzyme catalyses XMP + L-glutamine + ATP + H2O = GMP + L-glutamate + AMP + diphosphate + 2 H(+). It functions in the pathway purine metabolism; GMP biosynthesis; GMP from XMP (L-Gln route): step 1/1. Its function is as follows. Catalyzes the synthesis of GMP from XMP. The protein is GMP synthase [glutamine-hydrolyzing] of Pasteurella multocida (strain Pm70).